Here is a 490-residue protein sequence, read N- to C-terminus: Xylulose kinase (490 aa).

Substrate-binding residues include His99, Arg170, Asp280, and Asn281. Residues Trp355, 441–442, and Asn445 contribute to the ATP site; that span reads GA.

This sequence belongs to the FGGY kinase family. In terms of assembly, monomer.

The enzyme catalyses D-xylulose + ATP = D-xylulose 5-phosphate + ADP + H(+). In terms of biological role, phosphorylates D-xylulose to produce D-xylulose 5-phosphate, a molecule that may play an important role in the regulation of glucose metabolism and lipogenesis. This chain is Xylulose kinase (XYLB), found in Bos taurus (Bovine).